Here is a 153-residue protein sequence, read N- to C-terminus: ORM1-like protein 1 (153 aa).

The Cytoplasmic portion of the chain corresponds to 1–26 (MNVGVAHSEVNPNTRVMNSRGMWLTY). The next 2 helical transmembrane spans lie at 27 to 46 (ALGV…FSVP) and 47 to 67 (VAWT…LHAV). At 68-100 (KGTPFETPDQGKARLLTHWEQLDYGVQFTSSRK) the chain is on the cytoplasmic side. Residues 101–121 (FLTISPIILYFLASFYTKYDP) traverse the membrane as a helical segment. At 122–123 (TH) the chain is on the extracellular side. The chain crosses the membrane as a helical span at residues 124–144 (FFINTASLLSVLIPKLPQLHG). The Cytoplasmic portion of the chain corresponds to 145–153 (VRIFGINKY).

It belongs to the ORM family. As to quaternary structure, ceramide-sensitive subunit of the serine palmitoyltransferase (SPT) complex, which is also composed of SPTLC1, SPTLC2/3 and SPTSSA/B.

The protein localises to the endoplasmic reticulum membrane. Its function is as follows. Plays an essential role in the homeostatic regulation of sphingolipid de novo biosynthesis by modulating the activity of the serine palmitoyltransferase (SPT) in response to ceramide levels. When complexed to SPT, the binding of ceramides to its N-terminus stabilizes a conformation that block SPT substrate entry, hence preventing SPT catalytic activity. Through this mechanism, maintains ceramide levels at sufficient concentrations for the production of complex sphingolipids, but which prevents the accumulation of ceramides to levels that trigger apoptosis. This is ORM1-like protein 1 (ormdl1) from Xenopus laevis (African clawed frog).